We begin with the raw amino-acid sequence, 351 residues long: Increased glyphosate resistance protein (351 aa).

A compositionally biased stretch (basic and acidic residues) spans 1-18; sequence MHREDDSTSTGRREERLS. The segment at 1–29 is disordered; sequence MHREDDSTSTGRREERLSTGKGDSLQPGP.

In terms of biological role, confers an increase in glyphosate resistance when expressed in E.coli. This is Increased glyphosate resistance protein from Pseudomonas sp. (strain PG2982).